A 210-amino-acid polypeptide reads, in one-letter code: Cell wall protein SRL1 (210 aa).

An N-terminal signal peptide occupies residues 1-19 (MLQSVVFFALLTFASSVSA). Asparagine 23 carries an N-linked (GlcNAc...) asparagine glycan. Disordered stretches follow at residues 80–99 (SLST…HEIT) and 118–142 (LSPS…VKSF). The segment covering 118–127 (LSPSSTAASV) has biased composition (low complexity). Over residues 132 to 141 (SNNKDAKVKS) the composition is skewed to basic and acidic residues. N-linked (GlcNAc...) asparagine glycosylation is found at asparagine 174, asparagine 200, and asparagine 206.

It is found in the secreted. The protein localises to the cell wall. Its subcellular location is the cell surface. Required to stabilize the cell wall in the absence of multiple GPI-anchored mannoproteins. This Saccharomyces cerevisiae (strain ATCC 204508 / S288c) (Baker's yeast) protein is Cell wall protein SRL1 (SRL1).